The chain runs to 369 residues: UDP-N-acetylglucosamine--N-acetylmuramyl-(pentapeptide) pyrophosphoryl-undecaprenol N-acetylglucosamine transferase (369 aa).

Residues 16-18 (TGG), Asn-130, Arg-171, Ser-203, Ile-253, and Gln-298 each bind UDP-N-acetyl-alpha-D-glucosamine.

It belongs to the glycosyltransferase 28 family. MurG subfamily.

It is found in the cell inner membrane. It catalyses the reaction di-trans,octa-cis-undecaprenyl diphospho-N-acetyl-alpha-D-muramoyl-L-alanyl-D-glutamyl-meso-2,6-diaminopimeloyl-D-alanyl-D-alanine + UDP-N-acetyl-alpha-D-glucosamine = di-trans,octa-cis-undecaprenyl diphospho-[N-acetyl-alpha-D-glucosaminyl-(1-&gt;4)]-N-acetyl-alpha-D-muramoyl-L-alanyl-D-glutamyl-meso-2,6-diaminopimeloyl-D-alanyl-D-alanine + UDP + H(+). The protein operates within cell wall biogenesis; peptidoglycan biosynthesis. Cell wall formation. Catalyzes the transfer of a GlcNAc subunit on undecaprenyl-pyrophosphoryl-MurNAc-pentapeptide (lipid intermediate I) to form undecaprenyl-pyrophosphoryl-MurNAc-(pentapeptide)GlcNAc (lipid intermediate II). The sequence is that of UDP-N-acetylglucosamine--N-acetylmuramyl-(pentapeptide) pyrophosphoryl-undecaprenol N-acetylglucosamine transferase from Cytophaga hutchinsonii (strain ATCC 33406 / DSM 1761 / CIP 103989 / NBRC 15051 / NCIMB 9469 / D465).